The sequence spans 426 residues: Glutamate-1-semialdehyde 2,1-aminomutase (426 aa).

The residue at position 265 (lysine 265) is an N6-(pyridoxal phosphate)lysine.

Belongs to the class-III pyridoxal-phosphate-dependent aminotransferase family. HemL subfamily. In terms of assembly, homodimer. The cofactor is pyridoxal 5'-phosphate.

Its subcellular location is the cytoplasm. The enzyme catalyses (S)-4-amino-5-oxopentanoate = 5-aminolevulinate. Its pathway is porphyrin-containing compound metabolism; protoporphyrin-IX biosynthesis; 5-aminolevulinate from L-glutamyl-tRNA(Glu): step 2/2. In Halorhodospira halophila (strain DSM 244 / SL1) (Ectothiorhodospira halophila (strain DSM 244 / SL1)), this protein is Glutamate-1-semialdehyde 2,1-aminomutase.